We begin with the raw amino-acid sequence, 312 residues long: Olfactory receptor 6B2 (312 aa).

Over 1-25 (MSGENVTKVSTFILVGLPTAPGLQY) the chain is Extracellular. N5 is a glycosylation site (N-linked (GlcNAc...) asparagine). A helical transmembrane segment spans residues 26–46 (LLFLLFLLTYLFVLVENLAII). Over 47-54 (LIVWSSTS) the chain is Cytoplasmic. The chain crosses the membrane as a helical span at residues 55–75 (LHRPMYYFLSSMSFLEIWYVS). The Extracellular portion of the chain corresponds to 76 to 99 (DITPKMLEGFLLQQKRISFVGCMT). C97 and C189 form a disulfide bridge. The chain crosses the membrane as a helical span at residues 100-120 (QLYFFSSLVCTECVLLASMAY). Residues 121–139 (DRYVAICHPLRYHVLVTPG) lie on the Cytoplasmic side of the membrane. A helical transmembrane segment spans residues 140–160 (LCLQLVGFSFVSGFTISMIKV). At 161–196 (CFISSVTFCGSNVLNHFFCDISPILKLACTDFSTAE) the chain is on the extracellular side. The chain crosses the membrane as a helical span at residues 197 to 217 (LVDFILAFIILVFPLLATILS). At 218–237 (YWHITLAVLRIPSATGCWRA) the chain is on the cytoplasmic side. The chain crosses the membrane as a helical span at residues 238-258 (FSTCASHLTVVTVFYTALLFM). Residues 259–271 (YVRPQAIDSQSSN) lie on the Extracellular side of the membrane. A helical membrane pass occupies residues 272–292 (KLISAVYTVVTPIINPLIYCL). Residues 293-312 (RNKEFKDALKKALGLGQTSH) are Cytoplasmic-facing.

Belongs to the G-protein coupled receptor 1 family.

The protein resides in the cell membrane. Functionally, odorant receptor. In Homo sapiens (Human), this protein is Olfactory receptor 6B2 (OR6B2).